Here is a 20-residue protein sequence, read N- to C-terminus: Apidaecin 1+ (20 aa).

The disordered stretch occupies residues 1–20 (GKPNRPRPAPIQPRPPHPRL).

This sequence belongs to the apidaecin family.

It localises to the secreted. Antimicrobial peptide active against many Gram-negative enterobacterial and plant-associated bacterial species. Not active against other bacterial species like H.pylori, P.mirabilis, B.pertussis or N.gonorrhoeae. Functionally, among others, also active against C.jejuni and L.pneumophila but not against Y.enterocolitica. In terms of biological role, among others, also active against Y.enterocolitica butnot against L.pneumophila and C.jejuni. This chain is Apidaecin 1+, found in Pimpla disparis (Parasitic wasp).